The following is a 491-amino-acid chain: Glycogen synthase 1 (491 aa).

Residue K15 participates in ADP-alpha-D-glucose binding.

This sequence belongs to the glycosyltransferase 1 family. Bacterial/plant glycogen synthase subfamily.

The catalysed reaction is [(1-&gt;4)-alpha-D-glucosyl](n) + ADP-alpha-D-glucose = [(1-&gt;4)-alpha-D-glucosyl](n+1) + ADP + H(+). Its pathway is glycan biosynthesis; glycogen biosynthesis. Its function is as follows. Synthesizes alpha-1,4-glucan chains using ADP-glucose. The polypeptide is Glycogen synthase 1 (Synechococcus sp. (strain JA-2-3B'a(2-13)) (Cyanobacteria bacterium Yellowstone B-Prime)).